The sequence spans 497 residues: Glycogen synthase (497 aa).

Lysine 15 is a binding site for ADP-alpha-D-glucose.

The protein belongs to the glycosyltransferase 1 family. Bacterial/plant glycogen synthase subfamily.

It catalyses the reaction [(1-&gt;4)-alpha-D-glucosyl](n) + ADP-alpha-D-glucose = [(1-&gt;4)-alpha-D-glucosyl](n+1) + ADP + H(+). It participates in glycan biosynthesis; glycogen biosynthesis. Synthesizes alpha-1,4-glucan chains using ADP-glucose. This chain is Glycogen synthase, found in Thermodesulfovibrio yellowstonii (strain ATCC 51303 / DSM 11347 / YP87).